The following is a 576-amino-acid chain: Arginine--tRNA ligase (576 aa).

Positions 122–132 (PNVAKEMHVGH) match the 'HIGH' region motif.

It belongs to the class-I aminoacyl-tRNA synthetase family. Monomer.

The protein localises to the cytoplasm. The catalysed reaction is tRNA(Arg) + L-arginine + ATP = L-arginyl-tRNA(Arg) + AMP + diphosphate. The chain is Arginine--tRNA ligase from Serratia proteamaculans (strain 568).